The following is a 199-amino-acid chain: Protein-methionine-sulfoxide reductase heme-binding subunit MsrQ (199 aa).

6 helical membrane passes run 8-28 (IAWLKVFLHLAGFLPLVWLFW), 54-74 (FLLATLLVAPLARYAKQPLLI), 82-102 (LWCFAWATLHLTSYTLLELGI), 116-136 (PYLTLGMICWVILLALAATST), 149-169 (LLHNFVYLVAILAPIHYLWSV), and 171-191 (IVSPQPIIYALLAVVLLACRY).

The protein belongs to the MsrQ family. As to quaternary structure, heterodimer of a catalytic subunit (MsrP) and a heme-binding subunit (MsrQ). FMN serves as cofactor. Heme b is required as a cofactor.

The protein resides in the cell inner membrane. Functionally, part of the MsrPQ system that repairs oxidized periplasmic proteins containing methionine sulfoxide residues (Met-O), using respiratory chain electrons. Thus protects these proteins from oxidative-stress damage caused by reactive species of oxygen and chlorine generated by the host defense mechanisms. MsrPQ is essential for the maintenance of envelope integrity under bleach stress, rescuing a wide series of structurally unrelated periplasmic proteins from methionine oxidation. MsrQ provides electrons for reduction to the reductase catalytic subunit MsrP, using the quinone pool of the respiratory chain. The polypeptide is Protein-methionine-sulfoxide reductase heme-binding subunit MsrQ (Klebsiella pneumoniae (strain 342)).